We begin with the raw amino-acid sequence, 343 residues long: Transmembrane protein 120A (343 aa).

The Cytoplasmic portion of the chain corresponds to 1–135; sequence MQSPPPDPLG…KFAYKDEYEK (135 aa). Lys130 contacts CoA. Residues 136 to 156 traverse the membrane as a helical segment; it reads FKLYLTIILIVISFTCRFLLN. Residues 157–162 are Extracellular-facing; it reads SRVTDA. Residues 163 to 183 form a helical membrane-spanning segment; sequence AFNFLLVWYYCTLTIRESILI. At 184–190 the chain is on the cytoplasmic side; that stretch reads NNGSRIK. CoA-binding residues include Ser187 and Arg188. The chain crosses the membrane as a helical span at residues 191–211; the sequence is GWWVFHHYVSTFLSGVMLTWP. At 212–222 the chain is on the extracellular side; the sequence is DGLMYQKFRNQ. A helical membrane pass occupies residues 223–240; the sequence is FLSFSMYQSFVQFLQYYY. Residues Gln237, Tyr240, Gln241, and His283 each contribute to the CoA site. Topologically, residues 241–273 are cytoplasmic; it reads QSGCLYRLRALGERHTMDLTVEGFQSWMWRGLT. Residues 274 to 294 traverse the membrane as a helical segment; that stretch reads FLLPFLFFGHFWQLFNALTLF. Topologically, residues 295-305 are extracellular; the sequence is NLARDPECKEW. The helical transmembrane segment at 306–326 threads the bilayer; that stretch reads QVLMCGFPFLLLFLGNFFTTL. Residues 327-343 are Cytoplasmic-facing; sequence RVVHQKFHSQQHGNKKD. Lys332 provides a ligand contact to CoA.

This sequence belongs to the TMEM120 family. As to quaternary structure, homodimer. Forms heterooligomer with TMEM120B. Interacts with PKD2; TMEM120A inhibits PKD2 channel activity through the physical association of PKD2 with TMEM120A. Widely expressed, with higher expression in the heart, kidneys, colon and sensory neurons of the dorsal root ganglia. Expressed in nociceptors. Highly expressed in white adipose tissue (at protein level). Highly expressed in brown adipose tissue and expressed at low levels in liver.

Its subcellular location is the cell membrane. The protein localises to the nucleus envelope. It localises to the nucleus inner membrane. It is found in the endoplasmic reticulum. Functionally, multifunctional protein involved in mechanosensation, and plays an essential role in lipid metabolism and adipocyte differentiation. May function as a potential ion channel involved in sensing mechanical stimuli. Mediates the mechanosensitivity of the PKD2-TMEM120A channel complex through direct physical interaction. TMEM120A seems to affect mechanosensation by inhibiting PIEZO2 channels, possibly by altering cellular lipid content. TMEM120A is structurally similar to a lipid-modifying enzyme, ELOVL7, and contains a bound coenzyme A molecule, which suggests it might function as an enzyme in lipid metabolism. The chain is Transmembrane protein 120A from Mus musculus (Mouse).